Reading from the N-terminus, the 542-residue chain is CTP synthase (542 aa).

The interval 1 to 265 is amidoligase domain; that stretch reads MTRYVFITGG…DREILAHFQM (265 aa). CTP is bound at residue Ser13. UTP is bound at residue Ser13. ATP is bound by residues 14–19 and Asp71; that span reads SLGKGL. Residues Asp71 and Glu139 each contribute to the Mg(2+) site. CTP contacts are provided by residues 146-148, 186-191, and Lys222; these read DIE and KTKPTQ. UTP-binding positions include 186–191 and Lys222; that span reads KTKPTQ. Residue 238–240 coordinates ATP; sequence RDV. A Glutamine amidotransferase type-1 domain is found at 291-541; that stretch reads TIAIVGKYTG…IAAAIDQSRL (251 aa). Residue Gly353 coordinates L-glutamine. The Nucleophile; for glutamine hydrolysis role is filled by Cys380. Residues 381–384, Glu404, and Arg469 each bind L-glutamine; that span reads FGMQ. Residues His514 and Glu516 contribute to the active site.

It belongs to the CTP synthase family. Homotetramer.

The enzyme catalyses UTP + L-glutamine + ATP + H2O = CTP + L-glutamate + ADP + phosphate + 2 H(+). It carries out the reaction L-glutamine + H2O = L-glutamate + NH4(+). It catalyses the reaction UTP + NH4(+) + ATP = CTP + ADP + phosphate + 2 H(+). It participates in pyrimidine metabolism; CTP biosynthesis via de novo pathway; CTP from UDP: step 2/2. Its activity is regulated as follows. Allosterically activated by GTP, when glutamine is the substrate; GTP has no effect on the reaction when ammonia is the substrate. The allosteric effector GTP functions by stabilizing the protein conformation that binds the tetrahedral intermediate(s) formed during glutamine hydrolysis. Inhibited by the product CTP, via allosteric rather than competitive inhibition. Its function is as follows. Catalyzes the ATP-dependent amination of UTP to CTP with either L-glutamine or ammonia as the source of nitrogen. Regulates intracellular CTP levels through interactions with the four ribonucleotide triphosphates. The protein is CTP synthase of Methylorubrum extorquens (strain CM4 / NCIMB 13688) (Methylobacterium extorquens).